The chain runs to 327 residues: Poly(ribitol-phosphate) beta-N-acetylglucosaminyltransferase TarP (327 aa).

UDP-N-acetyl-alpha-D-glucosamine contacts are provided by residues Pro-9, Asp-41, Asn-68, Arg-76, and Asp-92 to Asp-94. Asp-94 lines the Mn(2+) pocket. The active-site Proton acceptor is the Asp-181.

The protein belongs to the glycosyltransferase 2 family. In terms of assembly, homotrimer. Mn(2+) serves as cofactor.

The catalysed reaction is 4-O-[(D-ribitylphospho)(n)-di{(2R)-glycerylphospho}]-N-acetyl-beta-D-mannosaminyl-(1-&gt;4)-N-acetyl-alpha-D-glucosaminyl di-trans,octa-cis-undecaprenyl diphosphate + n UDP-N-acetyl-alpha-D-glucosamine = 4-O-([3-N-acetyl-beta-D-glucosaminyl-1-D-ribitylphospho](n)-di{[2R]-1-glycerylphospho})-N-acetyl-beta-D-mannosaminyl-(1-&gt;4)-N-acetyl-alpha-D-glucosaminyl di-trans,octa-cis-undecaprenyl diphosphate + n UDP + n H(+). Its pathway is cell wall biogenesis; poly(ribitol phosphate) teichoic acid biosynthesis. Attaches beta-O-GlcNAc (beta-O-N-acetyl-D-glucosamine) residues to the C3 position of poly(RboP)-wall teichoic acids (WTAs). Attenuates immunogenicity of WTA and protects S.aureus against adaptative host defenses by allowing bacteria to evade recognition by preexisting anti-S.aureus antibodies. Also protects the cell from podophage infection. The sequence is that of Poly(ribitol-phosphate) beta-N-acetylglucosaminyltransferase TarP from Staphylococcus aureus (strain N315).